We begin with the raw amino-acid sequence, 189 residues long: Elongation factor P (189 aa).

It belongs to the elongation factor P family.

It is found in the cytoplasm. Its pathway is protein biosynthesis; polypeptide chain elongation. Its function is as follows. Involved in peptide bond synthesis. Stimulates efficient translation and peptide-bond synthesis on native or reconstituted 70S ribosomes in vitro. Probably functions indirectly by altering the affinity of the ribosome for aminoacyl-tRNA, thus increasing their reactivity as acceptors for peptidyl transferase. The protein is Elongation factor P of Campylobacter fetus subsp. fetus (strain 82-40).